Here is a 380-residue protein sequence, read N- to C-terminus: Tubulin alpha chain (380 aa).

GTP is bound by residues Glu-46, Ser-115, Gly-119, Thr-120, Thr-154, Asn-181, and Asn-202. Glu-46 is a Mg(2+) binding site. Glu-228 is an active-site residue.

Belongs to the tubulin family. As to quaternary structure, dimer of alpha and beta chains. A typical microtubule is a hollow water-filled tube with an outer diameter of 25 nm and an inner diameter of 15 nM. Alpha-beta heterodimers associate head-to-tail to form protofilaments running lengthwise along the microtubule wall with the beta-tubulin subunit facing the microtubule plus end conferring a structural polarity. Microtubules usually have 13 protofilaments but different protofilament numbers can be found in some organisms and specialized cells. Mg(2+) serves as cofactor.

The protein resides in the cytoplasm. Its subcellular location is the cytoskeleton. It catalyses the reaction GTP + H2O = GDP + phosphate + H(+). Tubulin is the major constituent of microtubules, a cylinder consisting of laterally associated linear protofilaments composed of alpha- and beta-tubulin heterodimers. Microtubules grow by the addition of GTP-tubulin dimers to the microtubule end, where a stabilizing cap forms. Below the cap, tubulin dimers are in GDP-bound state, owing to GTPase activity of alpha-tubulin. This Encephalitozoon hellem (Microsporidian parasite) protein is Tubulin alpha chain (TUB1).